We begin with the raw amino-acid sequence, 122 residues long: MGKINIKKGDLVQVITGAKAERGGDRGKQGKVLRVFTESNRVLVEGINRVTKHTKVGQSQRGSKTGGIEIVEAPIHISNVALVDPSTKKTTRVGYRLETVERDGRERVTRVRFAKSSGKDLA.

The protein belongs to the universal ribosomal protein uL24 family. As to quaternary structure, part of the 50S ribosomal subunit.

In terms of biological role, one of two assembly initiator proteins, it binds directly to the 5'-end of the 23S rRNA, where it nucleates assembly of the 50S subunit. Its function is as follows. One of the proteins that surrounds the polypeptide exit tunnel on the outside of the subunit. This Renibacterium salmoninarum (strain ATCC 33209 / DSM 20767 / JCM 11484 / NBRC 15589 / NCIMB 2235) protein is Large ribosomal subunit protein uL24.